A 365-amino-acid polypeptide reads, in one-letter code: S-adenosylmethionine:tRNA ribosyltransferase-isomerase (365 aa).

Belongs to the QueA family. In terms of assembly, monomer.

Its subcellular location is the cytoplasm. It carries out the reaction 7-aminomethyl-7-carbaguanosine(34) in tRNA + S-adenosyl-L-methionine = epoxyqueuosine(34) in tRNA + adenine + L-methionine + 2 H(+). The protein operates within tRNA modification; tRNA-queuosine biosynthesis. Functionally, transfers and isomerizes the ribose moiety from AdoMet to the 7-aminomethyl group of 7-deazaguanine (preQ1-tRNA) to give epoxyqueuosine (oQ-tRNA). The chain is S-adenosylmethionine:tRNA ribosyltransferase-isomerase from Rickettsia africae (strain ESF-5).